We begin with the raw amino-acid sequence, 271 residues long: Type III pantothenate kinase (271 aa).

An ATP-binding site is contributed by 6 to 13; that stretch reads DVRNTHTV. 109–112 is a binding site for substrate; the sequence is GADR. Residue D111 is the Proton acceptor of the active site. Position 131 (D131) interacts with K(+). S134 lines the ATP pocket. Residue T186 participates in substrate binding.

Belongs to the type III pantothenate kinase family. As to quaternary structure, homodimer. The cofactor is NH4(+). K(+) is required as a cofactor.

It localises to the cytoplasm. It catalyses the reaction (R)-pantothenate + ATP = (R)-4'-phosphopantothenate + ADP + H(+). Its pathway is cofactor biosynthesis; coenzyme A biosynthesis; CoA from (R)-pantothenate: step 1/5. Catalyzes the phosphorylation of pantothenate (Pan), the first step in CoA biosynthesis. This chain is Type III pantothenate kinase, found in Mycobacterium avium (strain 104).